A 66-amino-acid chain; its full sequence is Beta-toxin Cbo3 (66 aa).

Residues K1–N66 enclose the LCN-type CS-alpha/beta domain. 4 disulfides stabilise this stretch: C12/C65, C16/C41, C25/C46, and C29/C48. N66 is modified (asparagine amide).

It belongs to the long (4 C-C) scorpion toxin superfamily. Sodium channel inhibitor family. Beta subfamily. Expressed by the venom gland.

It is found in the secreted. Beta toxins bind voltage-independently at site-4 of sodium channels and shift the voltage of activation toward more negative potentials thereby affecting sodium channel activation and promoting spontaneous and repetitive firing. A mixture of Cbo2 and Cbo3 is weakly active on the human voltage-gated sodium channels Nav1.4/SCN4A and Nav1.6/SCN8A when tested at 200 nM. In vivo, is toxic to mice when intraperitoneally injected. The chain is Beta-toxin Cbo3 from Centruroides bonito (Scorpion).